The primary structure comprises 341 residues: Inositol-tetrakisphosphate 1-kinase 4 (341 aa).

The disordered stretch occupies residues 1–23 (MRLNGEISSGEEEEEEKQTGTTT). 1D-myo-inositol 6-phosphate is bound by residues lysine 38 and lysine 80. ATP-binding residues include arginine 115 and lysine 167. Positions 125–335 (LNLSDCHGKV…LLSLVESKCS (211 aa)) constitute an ATP-grasp domain. 1D-myo-inositol 6-phosphate contacts are provided by glycine 173 and histidine 178. 3 residues coordinate ATP: histidine 178, glutamine 199, and valine 202. 2 residues coordinate 1D-myo-inositol 6-phosphate: lysine 210 and tyrosine 212. Serine 225 provides a ligand contact to ATP. The interval 233-259 (ELSKVAGVFRFPRVSCAAASADDADLD) is catalytic specificity elements (CSE). Asparagine 288 contacts 1D-myo-inositol 6-phosphate. Position 290 (aspartate 290) interacts with Mg(2+). The ATP site is built by isoleucine 304, aspartate 305, and asparagine 307. Mg(2+) is bound by residues aspartate 305 and asparagine 307. Residues asparagine 307, glycine 311, and lysine 314 each contribute to the 1D-myo-inositol 6-phosphate site.

The protein belongs to the ITPK1 family. Monomer. Requires Mg(2+) as cofactor. In terms of tissue distribution, expressed in seeds.

The enzyme catalyses 1D-myo-inositol 1,3,4-trisphosphate + ATP = 1D-myo-inositol 1,3,4,5-tetrakisphosphate + ADP + H(+). The catalysed reaction is 1D-myo-inositol 1,3,4-trisphosphate + ATP = 1D-myo-inositol 1,3,4,6-tetrakisphosphate + ADP + H(+). It carries out the reaction 1D-myo-inositol 3,4,5,6-tetrakisphosphate + ATP = 1D-myo-inositol 1,3,4,5,6-pentakisphosphate + ADP + H(+). It catalyses the reaction 1D-myo-inositol 3,4,6-trisphosphate + ATP = 1D-myo-inositol 1,3,4,6-tetrakisphosphate + ADP + H(+). Its function is as follows. Kinase that can phosphorylate various inositol polyphosphate such as Ins(3,4,5,6)P4, Ins(3,4,6)P3 and Ins(1,3,4)P3. May participate in an inositol lipid-independent pathway of InsP6 synthesis. The polypeptide is Inositol-tetrakisphosphate 1-kinase 4 (Glycine max (Soybean)).